The primary structure comprises 398 residues: Inositol polyphosphate 5-phosphatase (398 aa).

Belongs to the inositol 1,4,5-trisphosphate 5-phosphatase type II family. As to expression, expressed in tail, cilia, dendrites, axon and male head.

The protein resides in the cytoplasm. Functionally, dephosphorylates a number of phosphatidylinositols. Controls the cellular levels and subcellular distribution of phosphatidylinositol 3,5-bisphosphate and phosphatidylinositol 3,4,5-trisphosphate. Has a role in sperm activation and motility. Influences the localization of the transient receptor potential polycystin (TRPP) complex proteins lov-1 and pkd-2. The sequence is that of Inositol polyphosphate 5-phosphatase from Caenorhabditis elegans.